The primary structure comprises 342 residues: Phosphoribosylformylglycinamidine cyclo-ligase (342 aa).

It belongs to the AIR synthase family.

Its subcellular location is the cytoplasm. The catalysed reaction is 2-formamido-N(1)-(5-O-phospho-beta-D-ribosyl)acetamidine + ATP = 5-amino-1-(5-phospho-beta-D-ribosyl)imidazole + ADP + phosphate + H(+). The protein operates within purine metabolism; IMP biosynthesis via de novo pathway; 5-amino-1-(5-phospho-D-ribosyl)imidazole from N(2)-formyl-N(1)-(5-phospho-D-ribosyl)glycinamide: step 2/2. This chain is Phosphoribosylformylglycinamidine cyclo-ligase, found in Staphylococcus aureus (strain Mu3 / ATCC 700698).